The sequence spans 232 residues: 7-cyano-7-deazaguanine synthase (232 aa).

8-18 provides a ligand contact to ATP; it reads FSGGQDSTTCL. Zn(2+)-binding residues include Cys187, Cys196, Cys199, and Cys202.

Belongs to the QueC family. Zn(2+) is required as a cofactor.

The catalysed reaction is 7-carboxy-7-deazaguanine + NH4(+) + ATP = 7-cyano-7-deazaguanine + ADP + phosphate + H2O + H(+). It functions in the pathway purine metabolism; 7-cyano-7-deazaguanine biosynthesis. In terms of biological role, catalyzes the ATP-dependent conversion of 7-carboxy-7-deazaguanine (CDG) to 7-cyano-7-deazaguanine (preQ(0)). The polypeptide is 7-cyano-7-deazaguanine synthase (Shewanella denitrificans (strain OS217 / ATCC BAA-1090 / DSM 15013)).